The chain runs to 272 residues: Probable feruloyl esterase C (272 aa).

Positions 1-22 are cleaved as a signal peptide; it reads MLPTILYSAILALSALTPSALA.

Belongs to the faeC family.

It localises to the secreted. The enzyme catalyses feruloyl-polysaccharide + H2O = ferulate + polysaccharide.. Functionally, involved in degradation of plant cell walls. Hydrolyzes the feruloyl-arabinose ester bond in arabinoxylans, and the feruloyl-galactose ester bond in pectin. Active against paranitrophenyl-acetate, methyl ferulate and wheat arabinoxylan. This chain is Probable feruloyl esterase C (faeC-1), found in Aspergillus clavatus (strain ATCC 1007 / CBS 513.65 / DSM 816 / NCTC 3887 / NRRL 1 / QM 1276 / 107).